The sequence spans 304 residues: Homoserine kinase (304 aa).

Position 90–100 (Pro-90–Ser-100) interacts with ATP.

This sequence belongs to the GHMP kinase family. Homoserine kinase subfamily.

The protein localises to the cytoplasm. It catalyses the reaction L-homoserine + ATP = O-phospho-L-homoserine + ADP + H(+). The protein operates within amino-acid biosynthesis; L-threonine biosynthesis; L-threonine from L-aspartate: step 4/5. Functionally, catalyzes the ATP-dependent phosphorylation of L-homoserine to L-homoserine phosphate. This is Homoserine kinase from Staphylococcus aureus (strain JH9).